Reading from the N-terminus, the 619-residue chain is METVDTTSRLAKLRELMKRERVDVYVVPSEDAHSSEYICAADARRAFISGFTGSAGCAIVTQEKAALSTDGRYFNQAARQLDENWELLKQGLPDVPTWQEWVAQQAEGGKNVGVDATVITAQQAKSLETRIKKKGGTSLLGIPNNLIDEVWGADRPNRPNNPVMVLDEKYSGKEFPLKIEAVRKELENKKSPGFVVSMLDEIAWLFNLRGTDIPYNPVFFSYAFISPESTTLYIDSSKLDEKVIAHLGSAVKIRPYHEIFDEIDLLAQKLKVGQPETDSKASEDGGKWLVSNKTSWALSKALGGDDAIEVIRSPVEEEKAVKNDTEKEGMKRCHIRDGAALTEYFAWLEDELLKGTKIDEVQAADKLEQIRSRGENFMGLSFDTISSTGPNAAVIHYKPEAGNCSVIDPKAIYLCDSGAQYLDGTTDTTRTLHFGEPTDMERKSYTLVLKGMIALDRAIFPKGTSGFALDILARQFLWSEGLDYRHGTGHGVGSFLNVHEGPFGIGTRIQYSEVALSPGMFVSNEPGYYEDGSFGIRIENIIMVKEVKTSHSFGDRPYFGFERVTMVPMCRKLIDAGLLTPAETEWLNSYHAEVFEKTHGFFEKDSLASKWLKRETTPI.

4 residues coordinate Mn(2+): D416, D427, E525, and E539.

This sequence belongs to the peptidase M24B family. Requires Mn(2+) as cofactor.

It carries out the reaction Release of any N-terminal amino acid, including proline, that is linked to proline, even from a dipeptide or tripeptide.. Its function is as follows. Catalyzes the removal of a penultimate prolyl residue from the N-termini of peptides. This Tuber melanosporum (strain Mel28) (Perigord black truffle) protein is Probable Xaa-Pro aminopeptidase P (AMPP).